A 61-amino-acid chain; its full sequence is Delta-actitoxin-Avd2c (61 aa).

Positions Met-1–Ala-20 are cleaved as a signal peptide. The propeptide occupies Asn-21–Gly-31. Cystine bridges form between Cys-36–Cys-51, Cys-37–Cys-45, and Cys-39–Cys-56.

The protein belongs to the sea anemone short toxin (type III) family.

The protein resides in the secreted. Its subcellular location is the nematocyst. Its function is as follows. Sodium channel inhibitor. 5 uM completely inhibits voltage-gated sodium channel (Nav) inactivation. This chain is Delta-actitoxin-Avd2c, found in Anemonia viridis (Snakelocks anemone).